Here is a 225-residue protein sequence, read N- to C-terminus: Orotate phosphoribosyltransferase (225 aa).

Lys31 is a binding site for 5-phospho-alpha-D-ribose 1-diphosphate. 39–40 (FF) contacts orotate. 5-phospho-alpha-D-ribose 1-diphosphate-binding positions include 78–79 (YK), Arg105, Lys106, Lys109, His111, and 130–138 (DDVLTSGKA). The orotate site is built by Thr134 and Arg163.

It belongs to the purine/pyrimidine phosphoribosyltransferase family. PyrE subfamily. As to quaternary structure, homodimer.

It carries out the reaction orotidine 5'-phosphate + diphosphate = orotate + 5-phospho-alpha-D-ribose 1-diphosphate. The protein operates within pyrimidine metabolism; UMP biosynthesis via de novo pathway; UMP from orotate: step 1/2. In terms of biological role, catalyzes the transfer of a ribosyl phosphate group from 5-phosphoribose 1-diphosphate to orotate, leading to the formation of orotidine monophosphate (OMP). The polypeptide is Orotate phosphoribosyltransferase (URA5) (Cryptococcus neoformans var. grubii serotype A (strain H99 / ATCC 208821 / CBS 10515 / FGSC 9487) (Filobasidiella neoformans var. grubii)).